A 103-amino-acid chain; its full sequence is Co-chaperonin GroES (103 aa).

Belongs to the GroES chaperonin family. Heptamer of 7 subunits arranged in a ring. Interacts with the chaperonin GroEL.

It localises to the cytoplasm. In terms of biological role, together with the chaperonin GroEL, plays an essential role in assisting protein folding. The GroEL-GroES system forms a nano-cage that allows encapsulation of the non-native substrate proteins and provides a physical environment optimized to promote and accelerate protein folding. GroES binds to the apical surface of the GroEL ring, thereby capping the opening of the GroEL channel. The polypeptide is Co-chaperonin GroES (Nostoc sp. (strain PCC 7120 / SAG 25.82 / UTEX 2576)).